The sequence spans 159 residues: Cyclic pyranopterin monophosphate synthase (159 aa).

Residues 75-77 (LCH) and 113-114 (ME) each bind substrate. The active site involves Asp128.

The protein belongs to the MoaC family. As to quaternary structure, homohexamer; trimer of dimers.

The enzyme catalyses (8S)-3',8-cyclo-7,8-dihydroguanosine 5'-triphosphate = cyclic pyranopterin phosphate + diphosphate. It participates in cofactor biosynthesis; molybdopterin biosynthesis. Catalyzes the conversion of (8S)-3',8-cyclo-7,8-dihydroguanosine 5'-triphosphate to cyclic pyranopterin monophosphate (cPMP). The chain is Cyclic pyranopterin monophosphate synthase from Cupriavidus necator (strain ATCC 17699 / DSM 428 / KCTC 22496 / NCIMB 10442 / H16 / Stanier 337) (Ralstonia eutropha).